A 203-amino-acid polypeptide reads, in one-letter code: CASP-like protein 1B1 (203 aa).

Residues 1 to 24 are Cytoplasmic-facing; that stretch reads MALVNAEKPEVGSSPSSLGPRNKS. Residues 25–45 form a helical membrane-spanning segment; sequence WVLLMLRFVAFLATAAATIVM. The Extracellular segment spans residues 46–76; it reads AANRETKTFVVATIGSTPIKATVTAKFQHTP. The helical transmembrane segment at 77–97 threads the bilayer; that stretch reads AFVFFVIANGMGSIHNLVMIA. Over 98–114 the chain is Cytoplasmic; the sequence is GDTFVRKFDYKGLRWVT. Residues 115 to 135 form a helical membrane-spanning segment; that stretch reads VAILDMLTAALISGGVNAAVF. Residues 136–165 lie on the Extracellular side of the membrane; that stretch reads MAELGKNGNSHAKWNKICDRFGSFCDHGGA. Residues 166-186 traverse the membrane as a helical segment; that stretch reads AIIASFIGLLLMLVISIISII. Residues 187-203 are Cytoplasmic-facing; it reads KLLKPKSPLVDSHVLAP.

This sequence belongs to the Casparian strip membrane proteins (CASP) family. Homodimer and heterodimers.

Its subcellular location is the cell membrane. In Ricinus communis (Castor bean), this protein is CASP-like protein 1B1.